The following is a 156-amino-acid chain: Ribonuclease pancreatic (156 aa).

The signal sequence occupies residues 1–28 (MALEKSLALLPLLVLVLLVLGWVQPSLG). Substrate-binding residues include Lys-35 and Arg-38. His-40 (proton acceptor) is an active-site residue. 4 disulfides stabilise this stretch: Cys-54–Cys-112, Cys-68–Cys-123, Cys-86–Cys-138, and Cys-93–Cys-100. An N-linked (GlcNAc...) asparagine glycan is attached at Asn-62. 69-73 (KPVNT) contributes to the substrate binding site. Asn-90 carries N-linked (GlcNAc...) asparagine glycosylation. Residues Lys-94 and Arg-113 each coordinate substrate. The active-site Proton donor is His-147.

The protein belongs to the pancreatic ribonuclease family. As to quaternary structure, monomer. Interacts with and forms tight 1:1 complexes with RNH1. Dimerization of two such complexes may occur. Interaction with RNH1 inhibits this protein.

Its subcellular location is the secreted. The enzyme catalyses an [RNA] containing cytidine + H2O = an [RNA]-3'-cytidine-3'-phosphate + a 5'-hydroxy-ribonucleotide-3'-[RNA].. The catalysed reaction is an [RNA] containing uridine + H2O = an [RNA]-3'-uridine-3'-phosphate + a 5'-hydroxy-ribonucleotide-3'-[RNA].. Endonuclease that catalyzes the cleavage of RNA on the 3' side of pyrimidine nucleotides. Acts on single-stranded and double-stranded RNA. In Lagothrix lagotricha (Brown woolly monkey), this protein is Ribonuclease pancreatic (RNASE1).